The primary structure comprises 545 residues: Chaperonin GroEL (545 aa).

Residues 29-32 (TLGP), lysine 50, 86-90 (DGTTT), glycine 413, and aspartate 495 contribute to the ATP site.

The protein belongs to the chaperonin (HSP60) family. In terms of assembly, forms a cylinder of 14 subunits composed of two heptameric rings stacked back-to-back. Interacts with the co-chaperonin GroES.

It is found in the cytoplasm. The enzyme catalyses ATP + H2O + a folded polypeptide = ADP + phosphate + an unfolded polypeptide.. Functionally, together with its co-chaperonin GroES, plays an essential role in assisting protein folding. The GroEL-GroES system forms a nano-cage that allows encapsulation of the non-native substrate proteins and provides a physical environment optimized to promote and accelerate protein folding. The sequence is that of Chaperonin GroEL from Borreliella burgdorferi (strain ATCC 35210 / DSM 4680 / CIP 102532 / B31) (Borrelia burgdorferi).